Here is a 548-residue protein sequence, read N- to C-terminus: Probable manganese-dependent inorganic pyrophosphatase (548 aa).

The interval 1–74 (MKALERVYVI…HIETLEPTVE (74 aa)) is PPase part 1. 3 residues coordinate Mn(2+): His-12, Asp-16, and Asp-18. CBS domains are found at residues 77-132 (ELKN…RLKI) and 254-311 (MSKK…VILV). The interval 306–548 (KKVILVDHNE…KIGEVLRRER (243 aa)) is PPase part 2. Mn(2+) is bound by residues Asp-312, His-334, and Asp-386.

Belongs to the PPase class C family. Mn(2+) serves as cofactor.

Its subcellular location is the cytoplasm. It carries out the reaction diphosphate + H2O = 2 phosphate + H(+). The chain is Probable manganese-dependent inorganic pyrophosphatase (ppaC) from Thermotoga maritima (strain ATCC 43589 / DSM 3109 / JCM 10099 / NBRC 100826 / MSB8).